Here is a 323-residue protein sequence, read N- to C-terminus: 1D-myo-inositol 2-acetamido-2-deoxy-alpha-D-glucopyranoside deacetylase (323 aa).

3 residues coordinate Zn(2+): histidine 28, aspartate 31, and histidine 163.

Belongs to the MshB deacetylase family. The cofactor is Zn(2+).

It carries out the reaction 1D-myo-inositol 2-acetamido-2-deoxy-alpha-D-glucopyranoside + H2O = 1D-myo-inositol 2-amino-2-deoxy-alpha-D-glucopyranoside + acetate. In terms of biological role, catalyzes the deacetylation of 1D-myo-inositol 2-acetamido-2-deoxy-alpha-D-glucopyranoside (GlcNAc-Ins) in the mycothiol biosynthesis pathway. This Streptomyces scabiei (strain 87.22) protein is 1D-myo-inositol 2-acetamido-2-deoxy-alpha-D-glucopyranoside deacetylase.